A 120-amino-acid chain; its full sequence is Large ribosomal subunit protein uL18 (120 aa).

Belongs to the universal ribosomal protein uL18 family. In terms of assembly, part of the 50S ribosomal subunit; part of the 5S rRNA/L5/L18/L25 subcomplex. Contacts the 5S and 23S rRNAs.

This is one of the proteins that bind and probably mediate the attachment of the 5S RNA into the large ribosomal subunit, where it forms part of the central protuberance. This is Large ribosomal subunit protein uL18 from Rhizobium etli (strain CIAT 652).